We begin with the raw amino-acid sequence, 394 residues long: 4-hydroxyphenylpyruvate dioxygenase (394 aa).

2 consecutive VOC domains span residues 27-161 (GYDH…LIER) and 193-351 (HIDH…LFTK). Residues His-196, His-279, and Glu-362 each contribute to the Fe cation site.

It belongs to the 4HPPD family. Requires Fe cation as cofactor.

The catalysed reaction is 3-(4-hydroxyphenyl)pyruvate + O2 = homogentisate + CO2. It participates in amino-acid degradation; L-phenylalanine degradation; acetoacetate and fumarate from L-phenylalanine: step 3/6. The polypeptide is 4-hydroxyphenylpyruvate dioxygenase (Yarrowia lipolytica (strain CLIB 122 / E 150) (Yeast)).